A 373-amino-acid polypeptide reads, in one-letter code: Dual-specificity RNA methyltransferase RlmN (373 aa).

The active-site Proton acceptor is the Glu94. One can recognise a Radical SAM core domain in the interval 100–339; sequence EDDRATLCVS…VIVRKTRGDD (240 aa). A disulfide bond links Cys107 and Cys344. Positions 114, 118, and 121 each coordinate [4Fe-4S] cluster. S-adenosyl-L-methionine is bound by residues 168-169, Ser200, 222-224, and Asn301; these read GE and SIH. Cys344 (S-methylcysteine intermediate) is an active-site residue.

Belongs to the radical SAM superfamily. RlmN family. Requires [4Fe-4S] cluster as cofactor.

It is found in the cytoplasm. The enzyme catalyses adenosine(2503) in 23S rRNA + 2 reduced [2Fe-2S]-[ferredoxin] + 2 S-adenosyl-L-methionine = 2-methyladenosine(2503) in 23S rRNA + 5'-deoxyadenosine + L-methionine + 2 oxidized [2Fe-2S]-[ferredoxin] + S-adenosyl-L-homocysteine. It carries out the reaction adenosine(37) in tRNA + 2 reduced [2Fe-2S]-[ferredoxin] + 2 S-adenosyl-L-methionine = 2-methyladenosine(37) in tRNA + 5'-deoxyadenosine + L-methionine + 2 oxidized [2Fe-2S]-[ferredoxin] + S-adenosyl-L-homocysteine. Functionally, specifically methylates position 2 of adenine 2503 in 23S rRNA and position 2 of adenine 37 in tRNAs. m2A2503 modification seems to play a crucial role in the proofreading step occurring at the peptidyl transferase center and thus would serve to optimize ribosomal fidelity. In Shewanella sp. (strain W3-18-1), this protein is Dual-specificity RNA methyltransferase RlmN.